Reading from the N-terminus, the 266-residue chain is Phosphatidylglycerol--prolipoprotein diacylglyceryl transferase (266 aa).

Helical transmembrane passes span valine 10 to isoleucine 30, leucine 56 to tyrosine 76, tryptophan 92 to phenylalanine 112, phenylalanine 120 to isoleucine 140, proline 172 to tyrosine 192, methionine 200 to valine 220, and tryptophan 234 to alanine 254. A 1,2-diacyl-sn-glycero-3-phospho-(1'-sn-glycerol) is bound at residue arginine 139.

It belongs to the Lgt family.

The protein localises to the cell inner membrane. It carries out the reaction L-cysteinyl-[prolipoprotein] + a 1,2-diacyl-sn-glycero-3-phospho-(1'-sn-glycerol) = an S-1,2-diacyl-sn-glyceryl-L-cysteinyl-[prolipoprotein] + sn-glycerol 1-phosphate + H(+). It functions in the pathway protein modification; lipoprotein biosynthesis (diacylglyceryl transfer). Functionally, catalyzes the transfer of the diacylglyceryl group from phosphatidylglycerol to the sulfhydryl group of the N-terminal cysteine of a prolipoprotein, the first step in the formation of mature lipoproteins. This Ectopseudomonas mendocina (strain ymp) (Pseudomonas mendocina) protein is Phosphatidylglycerol--prolipoprotein diacylglyceryl transferase.